We begin with the raw amino-acid sequence, 1089 residues long: Pentatricopeptide repeat-containing protein MRL1, chloroplastic (1089 aa).

The N-terminal 72 residues, 1–72 (MEVTSTTFIS…SIRSPRLVVR (72 aa)), are a transit peptide targeting the chloroplast. PPR repeat units follow at residues 466 to 500 (TMSTFNMLMSVCASSQDIEGARGVLRLVQESGMTA), 501 to 535 (DCKLYTTLISSCAKSGKVDAMFEVFHQMSNSGVEA), 536 to 570 (NLHTFGALIDGCARAGQVAKAFGAYGILRSKNVKP), 571 to 605 (DRVVFNALISACGQSGAVDRAFDVLAEMKAETHPI), 608 to 642 (DHISIGALMKACCNAGQVERAKEVYQMIHKYGIRG), 643 to 677 (TPEVYTIAVNSCSKSGDWDFACSIYKDMKEKDVTP), 678 to 712 (DEVFFSALIDVAGHAKMLDEAFGILQDAKSQGIRL), 713 to 747 (GTISYSSLMGACCNAKDWKKALELYEKIKSIKLRP), 748 to 782 (TISTMNALITALCEGNQLPKAMEYLDEIKTLGLKP), and 783 to 817 (NTITYSMLMLASERKDDFEVSFKLLSQAKGDGVSP).

It belongs to the PPR family. P subfamily. As to expression, expressed in stems, leaves and sepals.

The protein localises to the plastid. It is found in the chloroplast. In terms of biological role, regulator of the large subunit (LS) of RuBisCO. Involved either in the processing or in the stabilization of the processed transcript, probably by acting as a barrier to the 5'&gt;3' degradation. The protein is Pentatricopeptide repeat-containing protein MRL1, chloroplastic (MRL1) of Arabidopsis thaliana (Mouse-ear cress).